The sequence spans 166 residues: Zinc finger CCHC domain-containing protein 13 (166 aa).

The segment at 4 to 21 adopts a CCHC-type 1; degenerate zinc-finger fold; sequence KDFFACGHSGHWARGCPR. A CCHC-type 2; degenerate zinc finger spans residues 45-62; that stretch reads YTCYCCGESGRNAKNCVL. 4 consecutive CCHC-type zinc fingers follow at residues 65 to 82, 89 to 106, 110 to 127, and 128 to 145; these read NICYNCGRSGHIAKDCKD, QHCYTCGRLGHLARDCDR, QKCYSCGKLGHIQKDCAQ, and VKCYRCGEIGHVAINCSK.

This Homo sapiens (Human) protein is Zinc finger CCHC domain-containing protein 13 (ZCCHC13).